Here is a 105-residue protein sequence, read N- to C-terminus: DNA-directed RNA polymerase subunit omega (105 aa).

This sequence belongs to the RNA polymerase subunit omega family. The RNAP catalytic core consists of 2 alpha, 1 beta, 1 beta' and 1 omega subunit. When a sigma factor is associated with the core the holoenzyme is formed, which can initiate transcription.

It catalyses the reaction RNA(n) + a ribonucleoside 5'-triphosphate = RNA(n+1) + diphosphate. Its function is as follows. Promotes RNA polymerase assembly. Latches the N- and C-terminal regions of the beta' subunit thereby facilitating its interaction with the beta and alpha subunits. The chain is DNA-directed RNA polymerase subunit omega from Streptococcus mutans serotype c (strain ATCC 700610 / UA159).